A 179-amino-acid chain; its full sequence is Crossover junction endodeoxyribonuclease RuvC (179 aa).

Residues Asp7, Glu67, and Asp140 contribute to the active site. Mg(2+) is bound by residues Asp7, Glu67, and Asp140.

This sequence belongs to the RuvC family. In terms of assembly, homodimer which binds Holliday junction (HJ) DNA. The HJ becomes 2-fold symmetrical on binding to RuvC with unstacked arms; it has a different conformation from HJ DNA in complex with RuvA. In the full resolvosome a probable DNA-RuvA(4)-RuvB(12)-RuvC(2) complex forms which resolves the HJ. Mg(2+) serves as cofactor.

Its subcellular location is the cytoplasm. It carries out the reaction Endonucleolytic cleavage at a junction such as a reciprocal single-stranded crossover between two homologous DNA duplexes (Holliday junction).. Functionally, the RuvA-RuvB-RuvC complex processes Holliday junction (HJ) DNA during genetic recombination and DNA repair. Endonuclease that resolves HJ intermediates. Cleaves cruciform DNA by making single-stranded nicks across the HJ at symmetrical positions within the homologous arms, yielding a 5'-phosphate and a 3'-hydroxyl group; requires a central core of homology in the junction. The consensus cleavage sequence is 5'-(A/T)TT(C/G)-3'. Cleavage occurs on the 3'-side of the TT dinucleotide at the point of strand exchange. HJ branch migration catalyzed by RuvA-RuvB allows RuvC to scan DNA until it finds its consensus sequence, where it cleaves and resolves the cruciform DNA. The protein is Crossover junction endodeoxyribonuclease RuvC of Salinibacter ruber (strain DSM 13855 / M31).